A 277-amino-acid polypeptide reads, in one-letter code: Ras suppressor protein 1 (277 aa).

The tract at residues 1 to 23 is disordered; sequence MSKSLKKLVEESREKNQPEVDMS. Serine 2 bears the N-acetylserine mark. Over residues 7–23 the composition is skewed to basic and acidic residues; sequence KLVEESREKNQPEVDMS. LRR repeat units follow at residues 41 to 63, 64 to 85, 87 to 109, 110 to 133, 135 to 156, 158 to 179, and 181 to 202; these read HITQLVLSHNKLTTVPPNIAELK, NLEVLNFFNNQIEELPTQISSL, KLKHLNLGMNRLNTLPRGFGSLP, ALEVLDLTYNNLNENSLPGNFFYL, TLRALYLSDNDFEILPPDIGKL, KLQILSLRDNDLISLPKEIGEL, and QLKELHIQGNRLTVLPPELGNL. The disordered stretch occupies residues 250–277; sequence MQANPEPPKKNNDKSKKISRKPLAAKNK. The segment covering 256-265 has biased composition (basic and acidic residues); the sequence is PPKKNNDKSK.

Functionally, potentially plays a role in the Ras signal transduction pathway. Capable of suppressing v-Ras transformation in vitro. This chain is Ras suppressor protein 1 (RSU1), found in Bos taurus (Bovine).